A 451-amino-acid chain; its full sequence is Phosphoglucosamine mutase (451 aa).

Residue Ser102 is the Phosphoserine intermediate of the active site. Mg(2+) is bound by residues Ser102, Asp243, Asp245, and Asp247. Ser102 carries the post-translational modification Phosphoserine.

This sequence belongs to the phosphohexose mutase family. Mg(2+) serves as cofactor. In terms of processing, activated by phosphorylation.

It carries out the reaction alpha-D-glucosamine 1-phosphate = D-glucosamine 6-phosphate. In terms of biological role, catalyzes the conversion of glucosamine-6-phosphate to glucosamine-1-phosphate. The polypeptide is Phosphoglucosamine mutase (Sinorhizobium medicae (strain WSM419) (Ensifer medicae)).